The sequence spans 318 residues: tRNA dimethylallyltransferase (318 aa).

13 to 20 (GPTAVGKT) contributes to the ATP binding site. 15 to 20 (TAVGKT) is a substrate binding site. The tract at residues 38–41 (DSMQ) is interaction with substrate tRNA.

This sequence belongs to the IPP transferase family. In terms of assembly, monomer. The cofactor is Mg(2+).

The enzyme catalyses adenosine(37) in tRNA + dimethylallyl diphosphate = N(6)-dimethylallyladenosine(37) in tRNA + diphosphate. In terms of biological role, catalyzes the transfer of a dimethylallyl group onto the adenine at position 37 in tRNAs that read codons beginning with uridine, leading to the formation of N6-(dimethylallyl)adenosine (i(6)A). The protein is tRNA dimethylallyltransferase of Bacillus pumilus (strain SAFR-032).